Here is a 141-residue protein sequence, read N- to C-terminus: Hemoglobin subunit alpha-D (141 aa).

The region spanning 1–141 (VLTAEDRRLL…VADVLCEKYR (141 aa)) is the Globin domain. Heme b-binding residues include glutamine 58 and histidine 87.

It belongs to the globin family. In terms of assembly, heterotetramer of two alpha chains and two beta chains. Red blood cells.

In terms of biological role, involved in oxygen transport from the lung to the various peripheral tissues. This is Hemoglobin subunit alpha-D from Drymarchon melanurus erebennus (Texas indigo snake).